A 421-amino-acid chain; its full sequence is UDP-N-acetylglucosamine 1-carboxyvinyltransferase (421 aa).

24-25 (KN) provides a ligand contact to phosphoenolpyruvate. Arginine 93 is a binding site for UDP-N-acetyl-alpha-D-glucosamine. Cysteine 117 (proton donor) is an active-site residue. Residue cysteine 117 is modified to 2-(S-cysteinyl)pyruvic acid O-phosphothioketal. Aspartate 307 and isoleucine 329 together coordinate UDP-N-acetyl-alpha-D-glucosamine.

It belongs to the EPSP synthase family. MurA subfamily.

Its subcellular location is the cytoplasm. The catalysed reaction is phosphoenolpyruvate + UDP-N-acetyl-alpha-D-glucosamine = UDP-N-acetyl-3-O-(1-carboxyvinyl)-alpha-D-glucosamine + phosphate. The protein operates within cell wall biogenesis; peptidoglycan biosynthesis. In terms of biological role, cell wall formation. Adds enolpyruvyl to UDP-N-acetylglucosamine. The sequence is that of UDP-N-acetylglucosamine 1-carboxyvinyltransferase from Blochmanniella pennsylvanica (strain BPEN).